The chain runs to 549 residues: NAC domain-containing protein 53 (549 aa).

The 151-residue stretch at 9-159 (LAPGFRFHPT…AFVLCRIFQK (151 aa)) folds into the NAC domain. A DNA-binding region spans residues 108 to 165 (VGMKKTLVYHKGRAPRGERTNWVMHEYRLVDQDLDKTGVHQDAFVLCRIFQKSGSGPK). Positions 395 to 416 (LEKEETSRSKHVVEEKEKDEAS) are enriched in basic and acidic residues. The interval 395–418 (LEKEETSRSKHVVEEKEKDEASCS) is disordered. The chain crosses the membrane as a helical span at residues 526–546 (LIFMCFWVLLLSVSFKVSILV).

Expressed in roots, rosette leaves, cauline leaves, shoot apex and stems.

It is found in the endoplasmic reticulum membrane. The protein resides in the nucleus. Its function is as follows. Transcriptional activator activated by proteolytic cleavage through regulated intramembrane proteolysis (RIP). Promotes reactive oxygen species (ROS) production during drought-induced leaf senescence. In response to abscisic acid (ABA)-mediated drought stress signals, binds directly to the promoters of RBOHC and RBOHE genes, encoding ROS biosynthetic enzymes, resulting in ROS accumulation and triggering leaf senescence via programmed cell death (PCD). ROS-induced leaf senescence sustains plant survival under drought conditions. Involved in heat stress response. Modulates PCD through a ROS-mediated positive feedback control under heat stress conditions. This may provide an adaptation strategy for plant survival under extreme heat stress conditions. Acts as a repressor in preventing anther dehiscence during stamen development by suppressing genes that participate in jasmonic acid (JA) biosynthesis, such as DAD1, AOS, AOC3, OPR3 and 4CLL5/OPCL1. The polypeptide is NAC domain-containing protein 53 (Arabidopsis thaliana (Mouse-ear cress)).